The following is a 160-amino-acid chain: uncharacterized protein (160 aa).

The region spanning 37–110 (LMSLKPKEDI…TDYLKLYTIY (74 aa)) is the Cupin type-2 domain.

Its subcellular location is the virion. This is an uncharacterized protein from Acanthamoeba polyphaga mimivirus (APMV).